A 242-amino-acid polypeptide reads, in one-letter code: Floral homeotic protein AGAMOUS (242 aa).

Residues R19–Y73 enclose the MADS-box domain. Positions A103 to S193 constitute a K-box domain.

As to expression, expressed exclusively in stamens and carpels.

Its subcellular location is the nucleus. Functionally, probable transcription factor involved in regulating genes that determines stamen and carpel development in wild-type flowers. In Petunia hybrida (Petunia), this protein is Floral homeotic protein AGAMOUS (AG1).